The sequence spans 477 residues: MQVLHVCSEMFPLLKTGGLADVIGALPAAQIADGVDARVLLPAFPDIRRGVTDAQVVSRRDTFAGHITLLFGHYNGVGIYLIDAPHLYDRPGSPYHDTNLFAYTDNVLRFALLGWVGAEMASGLDPFWRPDVVHAHDWHAGLAPAYLAARGRPAKSVFTVHNLAYQGMFYAHHMNDIQLPWSFFNIHGLEFNGQISFLKAGLYYADHITAVSPTYAREITEPQFAYGMEGLLQQRHREGRLSGVLNGVDEKIWSPETDLLLASRYTRDTLEDKAENKSQLQIAMGLKVDDKVPLFAVVSRLTSQKGLDLVLEALPGLLEQGGQLALLGAGDPVLQEGFLAAAAEYPGQVGVQIGYHEAFSHRIMGGADVILVPSRFEPCGLTQLYGLKYGTLPLVRRTGGLADTVSDCSLENLADGVASGFVFEDSNAWSLLRAIRRAFVLWSRPSLWRFVQRQAMAMDFSWQVAAKSYRELYYRLK.

ADP-alpha-D-glucose is bound at residue Lys15.

Belongs to the glycosyltransferase 1 family. Bacterial/plant glycogen synthase subfamily.

The catalysed reaction is [(1-&gt;4)-alpha-D-glucosyl](n) + ADP-alpha-D-glucose = [(1-&gt;4)-alpha-D-glucosyl](n+1) + ADP + H(+). It functions in the pathway glycan biosynthesis; glycogen biosynthesis. Synthesizes alpha-1,4-glucan chains using ADP-glucose. The protein is Glycogen synthase of Shigella flexneri serotype 5b (strain 8401).